Consider the following 941-residue polypeptide: ATP-dependent 6-phosphofructokinase subunit beta (941 aa).

The segment at 2–558 (PDASLFNGTS…HMKNFISTNS (557 aa)) is N-terminal catalytic PFK domain 1. ATP is bound by residues G191, 255 to 256 (RC), and 285 to 288 (GDGS). D286 contacts Mg(2+). Beta-D-fructose 6-phosphate contacts are provided by residues 331–333 (SID), R368, 375–377 (MGR), E432, R460, and 466–469 (HVQR). D333 (proton acceptor) is an active-site residue. An interdomain linker region spans residues 559-572 (ADHVPPSLPLEKRK). The interval 573–941 (KVAIINVGAP…SDMLSGRTSL (369 aa)) is C-terminal regulatory PFK domain 2. Beta-D-fructose 2,6-bisphosphate-binding positions include R643, 701–705 (TISNN), R739, 746–748 (QGG), E806, K832, 838–841 (HVQQ), and R918.

The protein belongs to the phosphofructokinase type A (PFKA) family. ATP-dependent PFK group I subfamily. Eukaryotic two domain clade 'E' sub-subfamily. In terms of assembly, heterododecamer of 4 alpha, 4 beta and 4 gamma chains. The gamma chain bridges the N-terminal halves of the alpha and beta subunits. The cofactor is Mg(2+).

Its subcellular location is the cytoplasm. The enzyme catalyses beta-D-fructose 6-phosphate + ATP = beta-D-fructose 1,6-bisphosphate + ADP + H(+). It functions in the pathway carbohydrate degradation; glycolysis; D-glyceraldehyde 3-phosphate and glycerone phosphate from D-glucose: step 3/4. Its activity is regulated as follows. Allosterically activated by ADP, AMP, or fructose 2,6-bisphosphate, and allosterically inhibited by ATP or citrate. Functionally, catalyzes the phosphorylation of D-fructose 6-phosphate to fructose 1,6-bisphosphate by ATP, the first committing step of glycolysis. The sequence is that of ATP-dependent 6-phosphofructokinase subunit beta (PFK2) from Komagataella phaffii (strain GS115 / ATCC 20864) (Yeast).